The primary structure comprises 270 residues: Proteasome subunit alpha type-1 (270 aa).

The disordered stretch occupies residues 239–270; sequence SMEAAEEAPAAEAESSSMQEEDKGTDAAPMDI. Over residues 245 to 256 the composition is skewed to low complexity; that stretch reads EAPAAEAESSSM.

It belongs to the peptidase T1A family. The 26S proteasome consists of a 20S proteasome core and two 19S regulatory subunits. The 20S proteasome core is composed of 28 subunits that are arranged in four stacked rings, resulting in a barrel-shaped structure. The two end rings are each formed by seven alpha subunits, and the two central rings are each formed by seven beta subunits. The catalytic chamber with the active sites is on the inside of the barrel.

Its subcellular location is the cytoplasm. It localises to the nucleus. The proteasome is a multicatalytic proteinase complex which is characterized by its ability to cleave peptides with Arg, Phe, Tyr, Leu, and Glu adjacent to the leaving group at neutral or slightly basic pH. The proteasome has an ATP-dependent proteolytic activity. In Oryza sativa subsp. japonica (Rice), this protein is Proteasome subunit alpha type-1 (PAF1).